Consider the following 122-residue polypeptide: UPF0102 protein CE1920 (122 aa).

Belongs to the UPF0102 family.

This Corynebacterium efficiens (strain DSM 44549 / YS-314 / AJ 12310 / JCM 11189 / NBRC 100395) protein is UPF0102 protein CE1920.